Here is a 552-residue protein sequence, read N- to C-terminus: Arginine--tRNA ligase (552 aa).

The short motif at 123–133 (ANPTGPLTIGR) is the 'HIGH' region element.

It belongs to the class-I aminoacyl-tRNA synthetase family. As to quaternary structure, monomer.

It localises to the cytoplasm. It carries out the reaction tRNA(Arg) + L-arginine + ATP = L-arginyl-tRNA(Arg) + AMP + diphosphate. In Chlorobium phaeovibrioides (strain DSM 265 / 1930) (Prosthecochloris vibrioformis (strain DSM 265)), this protein is Arginine--tRNA ligase.